We begin with the raw amino-acid sequence, 309 residues long: Probable manganese-dependent inorganic pyrophosphatase (309 aa).

Residues His9, Asp13, Asp15, Asp75, His97, and Asp149 each contribute to the Mn(2+) site.

The protein belongs to the PPase class C family. It depends on Mn(2+) as a cofactor.

The protein localises to the cytoplasm. It catalyses the reaction diphosphate + H2O = 2 phosphate + H(+). In Bacillus cereus (strain AH187), this protein is Probable manganese-dependent inorganic pyrophosphatase.